We begin with the raw amino-acid sequence, 223 residues long: Deoxyribose-phosphate aldolase (223 aa).

Asp91 (proton donor/acceptor) is an active-site residue. Catalysis depends on Lys153, which acts as the Schiff-base intermediate with acetaldehyde. The Proton donor/acceptor role is filled by Lys182.

The protein belongs to the DeoC/FbaB aldolase family. DeoC type 1 subfamily.

Its subcellular location is the cytoplasm. The catalysed reaction is 2-deoxy-D-ribose 5-phosphate = D-glyceraldehyde 3-phosphate + acetaldehyde. It participates in carbohydrate degradation; 2-deoxy-D-ribose 1-phosphate degradation; D-glyceraldehyde 3-phosphate and acetaldehyde from 2-deoxy-alpha-D-ribose 1-phosphate: step 2/2. In terms of biological role, catalyzes a reversible aldol reaction between acetaldehyde and D-glyceraldehyde 3-phosphate to generate 2-deoxy-D-ribose 5-phosphate. The sequence is that of Deoxyribose-phosphate aldolase from Streptococcus pyogenes serotype M2 (strain MGAS10270).